The following is a 287-amino-acid chain: Pyridoxal kinase PdxY (287 aa).

Substrate-binding positions include S10 and 45-46 (TQ). Residues D112, A144, E149, K182, and 209 to 212 (RPLV) contribute to the ATP site. A substrate-binding site is contributed by D224.

This sequence belongs to the pyridoxine kinase family. PdxY subfamily. Homodimer. Mg(2+) is required as a cofactor.

The catalysed reaction is pyridoxal + ATP = pyridoxal 5'-phosphate + ADP + H(+). It functions in the pathway cofactor metabolism; pyridoxal 5'-phosphate salvage; pyridoxal 5'-phosphate from pyridoxal: step 1/1. Functionally, pyridoxal kinase involved in the salvage pathway of pyridoxal 5'-phosphate (PLP). Catalyzes the phosphorylation of pyridoxal to PLP. This is Pyridoxal kinase PdxY from Shigella dysenteriae serotype 1 (strain Sd197).